We begin with the raw amino-acid sequence, 578 residues long: Monooxygenase cfoE (578 aa).

The helical transmembrane segment at 549 to 569 threads the bilayer; the sequence is IVLSGVPLVVFGSLHLVLWIF.

The protein belongs to the FMO family. FAD serves as cofactor.

The protein resides in the membrane. The protein operates within secondary metabolite biosynthesis; flavonoid biosynthesis. Its function is as follows. Monooxygenase; part of the gene cluster that mediates the biosynthesis of chlorflavonin, a fungal flavonoid with acetolactate synthase inhibitory activity. Within the pathway, cfoE is responsible for the chlorination of the flavonoid skeleton at position C3'. The pathway begins with the PKS-NRPS hybrid synthetase cfoA that uses benzoic acid or p-hydroxybenzoic acid as a starter unit with four rounds of chain elongation using malonyl-CoA to form the chalcone skeleton. Then, a new type of chalcone isomerase, cfoK, catalyzes the conversion of the chalcone into a flavanone by a histidine-mediated oxa-Michael addition mechanism. The desaturation of flavanone to flavone is catalyzed by a new type of flavone synthase, the flavin mononucleotide (FMN)-dependent oxidoreductase cfoJ. Monooxygenases cfoF, cfoG, and P450 cfoH are responsible for the hydroxylation of the flavonoid skeleton at sites C3, C8, and C2', respectively. Like cfoF, the dehydratase cfoI plays also a role in the hydroxylation of position C3. Methyltransferases cfoB, cfoC, and cfoD then catalyze the methylation of C7-OH, C8-OH, and C3-OH, respectively. Finally, the monooxygenase cfoE is responsible for the chlorination of flavonoid at position C3'. This chain is Monooxygenase cfoE, found in Aspergillus candidus.